A 231-amino-acid polypeptide reads, in one-letter code: Uracil phosphoribosyltransferase (231 aa).

Position 38-42 (38-42 (KGLVR)) interacts with GTP. Residues R87, R112, and 140 to 148 (DPMIATGST) contribute to the 5-phospho-alpha-D-ribose 1-diphosphate site. Residues I203 and 208-210 (GDA) contribute to the uracil site. D209 is a binding site for 5-phospho-alpha-D-ribose 1-diphosphate.

Belongs to the UPRTase family. The cofactor is Mg(2+).

It carries out the reaction UMP + diphosphate = 5-phospho-alpha-D-ribose 1-diphosphate + uracil. The protein operates within pyrimidine metabolism; UMP biosynthesis via salvage pathway; UMP from uracil: step 1/1. Its activity is regulated as follows. Allosterically activated by GTP. Its function is as follows. Catalyzes the conversion of uracil and 5-phospho-alpha-D-ribose 1-diphosphate (PRPP) to UMP and diphosphate. The chain is Uracil phosphoribosyltransferase from Methanococcus maripaludis (strain C6 / ATCC BAA-1332).